A 275-amino-acid polypeptide reads, in one-letter code: Polyamine aminopropyltransferase (275 aa).

Positions 2–235 (EFWFTEKQTE…GMWTFTIGSK (234 aa)) constitute a PABS domain. Glutamine 31 is an S-methyl-5'-thioadenosine binding site. 2 residues coordinate spermidine: histidine 62 and aspartate 86. S-methyl-5'-thioadenosine is bound by residues aspartate 106 and 137–138 (DG). Residue aspartate 155 is the Proton acceptor of the active site. 155–158 (DSTE) lines the spermidine pocket. Residue proline 162 coordinates S-methyl-5'-thioadenosine.

It belongs to the spermidine/spermine synthase family. Homodimer or homotetramer.

It localises to the cytoplasm. It carries out the reaction S-adenosyl 3-(methylsulfanyl)propylamine + putrescine = S-methyl-5'-thioadenosine + spermidine + H(+). It functions in the pathway amine and polyamine biosynthesis; spermidine biosynthesis; spermidine from putrescine: step 1/1. Functionally, catalyzes the irreversible transfer of a propylamine group from the amino donor S-adenosylmethioninamine (decarboxy-AdoMet) to putrescine (1,4-diaminobutane) to yield spermidine. The chain is Polyamine aminopropyltransferase from Shouchella clausii (strain KSM-K16) (Alkalihalobacillus clausii).